We begin with the raw amino-acid sequence, 438 residues long: Cysteine--tRNA ligase (438 aa).

Zn(2+) is bound at residue Cys28. The short motif at 30 to 40 is the 'HIGH' region element; it reads PTVYNHLHLGN. Residues Cys207, His232, and Glu236 each coordinate Zn(2+). Residues 264-268 carry the 'KMSKS' region motif; that stretch reads KMSKS. Lys267 contacts ATP.

The protein belongs to the class-I aminoacyl-tRNA synthetase family. In terms of assembly, monomer. The cofactor is Zn(2+).

It is found in the cytoplasm. The enzyme catalyses tRNA(Cys) + L-cysteine + ATP = L-cysteinyl-tRNA(Cys) + AMP + diphosphate. The protein is Cysteine--tRNA ligase of Onion yellows phytoplasma (strain OY-M).